The chain runs to 269 residues: MPELPEVETSRRGIEPHLVGNVIQYAVVRNGRLRWPVAEEIMKLSDQLVLSIQRRAKYLLIELANGWIIVHLGMSGSLRILPEERPAEKHDHVDLVMADGKVLRYTDPRRFGAWLWSDDLERCSVLAHLGPEPLSDDFNGFYLYTRSSNKKTLIKPWLMDNKLVVGVGNIYANEALFTAHIQPDRPAQTLTEREAHLLAETIKKVLQRSIERGGTTLRDFLQSDGKPGYFAQELFVYGRAGEPCRICGEQIESIKLGQRSTFFCRHCQY.

The active-site Schiff-base intermediate with DNA is the P2. E3 (proton donor) is an active-site residue. The Proton donor; for beta-elimination activity role is filled by K57. Positions 90, 109, and 150 each coordinate DNA. Residues 235–269 (FVYGRAGEPCRICGEQIESIKLGQRSTFFCRHCQY) form an FPG-type zinc finger. The Proton donor; for delta-elimination activity role is filled by R259.

The protein belongs to the FPG family. As to quaternary structure, monomer. Zn(2+) is required as a cofactor.

It carries out the reaction Hydrolysis of DNA containing ring-opened 7-methylguanine residues, releasing 2,6-diamino-4-hydroxy-5-(N-methyl)formamidopyrimidine.. The enzyme catalyses 2'-deoxyribonucleotide-(2'-deoxyribose 5'-phosphate)-2'-deoxyribonucleotide-DNA = a 3'-end 2'-deoxyribonucleotide-(2,3-dehydro-2,3-deoxyribose 5'-phosphate)-DNA + a 5'-end 5'-phospho-2'-deoxyribonucleoside-DNA + H(+). Involved in base excision repair of DNA damaged by oxidation or by mutagenic agents. Acts as a DNA glycosylase that recognizes and removes damaged bases. Has a preference for oxidized purines, such as 7,8-dihydro-8-oxoguanine (8-oxoG). Has AP (apurinic/apyrimidinic) lyase activity and introduces nicks in the DNA strand. Cleaves the DNA backbone by beta-delta elimination to generate a single-strand break at the site of the removed base with both 3'- and 5'-phosphates. The protein is Formamidopyrimidine-DNA glycosylase of Photorhabdus laumondii subsp. laumondii (strain DSM 15139 / CIP 105565 / TT01) (Photorhabdus luminescens subsp. laumondii).